The chain runs to 378 residues: Chaperone protein DnaJ (378 aa).

Residues 5–70 enclose the J domain; it reads DYYEVLSVSR…DKKAAYDQFG (66 aa). The CR-type zinc-finger motif lies at 133-211; sequence GLTKELRIPT…CHGEGRVEKS (79 aa). Residues C146, C149, C163, C166, C185, C188, C199, and C202 each contribute to the Zn(2+) site. CXXCXGXG motif repeat units lie at residues 146-153, 163-170, 185-192, and 199-206; these read CDSCDGSG, CGTCHGQG, CPTCHGRG, and CNKCHGEG.

Belongs to the DnaJ family. In terms of assembly, homodimer. Requires Zn(2+) as cofactor.

It is found in the cytoplasm. Its function is as follows. Participates actively in the response to hyperosmotic and heat shock by preventing the aggregation of stress-denatured proteins and by disaggregating proteins, also in an autonomous, DnaK-independent fashion. Unfolded proteins bind initially to DnaJ; upon interaction with the DnaJ-bound protein, DnaK hydrolyzes its bound ATP, resulting in the formation of a stable complex. GrpE releases ADP from DnaK; ATP binding to DnaK triggers the release of the substrate protein, thus completing the reaction cycle. Several rounds of ATP-dependent interactions between DnaJ, DnaK and GrpE are required for fully efficient folding. Also involved, together with DnaK and GrpE, in the DNA replication of plasmids through activation of initiation proteins. This Shewanella sediminis (strain HAW-EB3) protein is Chaperone protein DnaJ.